We begin with the raw amino-acid sequence, 83 residues long: Small ribosomal subunit protein bS18 (83 aa).

The protein belongs to the bacterial ribosomal protein bS18 family. In terms of assembly, part of the 30S ribosomal subunit. Forms a tight heterodimer with protein bS6.

Binds as a heterodimer with protein bS6 to the central domain of the 16S rRNA, where it helps stabilize the platform of the 30S subunit. This is Small ribosomal subunit protein bS18 from Cytophaga hutchinsonii (strain ATCC 33406 / DSM 1761 / CIP 103989 / NBRC 15051 / NCIMB 9469 / D465).